Consider the following 186-residue polypeptide: Heat shock protein 23 (186 aa).

Positions 53–161 constitute a sHSP domain; the sequence is VGASSGSSGA…KGNERIVQIQ (109 aa). The tract at residues 163–186 is disordered; sequence VGPAHLNVKENPKEAVEQDNGNDK. Positions 169 to 186 are enriched in basic and acidic residues; it reads NVKENPKEAVEQDNGNDK.

Belongs to the small heat shock protein (HSP20) family.

The polypeptide is Heat shock protein 23 (Hsp23) (Drosophila melanogaster (Fruit fly)).